A 232-amino-acid chain; its full sequence is MAQSKRVKAIAAAVAPGKAYAFEDAIKILKTATKAKFVESIDVAVRLGVDAKKSDQQVRGSTVLPAGTGKSVRVAVFAPAGAKADEALAAGAEAVGMDDLAEKMQAGDLSYDVVIATPDAMRVVGKLGTLLGPRGLMPNPKVGTVSANPGEAVKNAKSGQVRYRTDKAGIIHCTIGKASFDDEALKSNLQALLLDLVKAKPATSKGTYLQKVSVSSTMGPGVTVDQSSLSLK.

The protein belongs to the universal ribosomal protein uL1 family. In terms of assembly, part of the 50S ribosomal subunit.

In terms of biological role, binds directly to 23S rRNA. The L1 stalk is quite mobile in the ribosome, and is involved in E site tRNA release. Its function is as follows. Protein L1 is also a translational repressor protein, it controls the translation of the L11 operon by binding to its mRNA. The sequence is that of Large ribosomal subunit protein uL1 from Xanthomonas oryzae pv. oryzae (strain MAFF 311018).